Reading from the N-terminus, the 961-residue chain is Rho guanine nucleotide exchange factor 2 (961 aa).

The segment at 12 to 59 (GHLFTTISVSGMTMCYACNKSITAKEALICPTCNVTIHNRCKDTLANC) adopts a Phorbol-ester/DAG-type zinc-finger fold. Phosphoserine is present on residues Ser-82, Ser-95, Ser-102, Ser-106, Ser-110, Ser-124, Ser-136, Ser-145, Ser-147, and Ser-150. Residues 104–134 (RQSLLGSRRGRSPLSLAKSVSTTNIAGHFND) form an interaction with DYNLT1 region. Residues 209-406 (KQQDVIYELI…KELLSNVDQD (198 aa)) form the DH domain. Lys-327 carries the post-translational modification N6-acetyllysine. The PH domain occupies 446-545 (KLIHDGCLLW…WIRVIQQSVR (100 aa)). Positions 561-588 (EAYLRRIKMELQQKDRALVELLQEKVGL) form a coiled coil. 2 positions are modified to phosphoserine: Ser-619 and Ser-622. Position 653 is a phosphothreonine; by MAPK1 or MAPK3 (Thr-653). Positions 659-679 (LPVETDSGGNTSPGVTANGEA) are disordered. Ser-665, Ser-670, Ser-685, and Ser-756 each carry phosphoserine. Over residues 742–761 (PEGPERREKLTRANSRDGEA) the composition is skewed to basic and acidic residues. The disordered stretch occupies residues 742–770 (PEGPERREKLTRANSRDGEAGRAGAAPVA). Positions 772 to 841 (EKQATELALL…RQLAALGHTE (70 aa)) form a coiled coil. Ser-860 bears the Phosphoserine; by PAK1 and AURKA mark. Residues 867–961 (LYLSFTPPQP…RDGEPVASES (95 aa)) form a disordered region. The residue at position 868 (Tyr-868) is a Phosphotyrosine. Ser-870 is subject to Phosphoserine; by PAK4. Positions 894–913 (RPFEDRERQELGSPDERLQD) are enriched in basic and acidic residues. Phosphoserine occurs at positions 906, 914, and 915. Residues 915–925 (SDPDTGSEEEG) show a composition bias toward acidic residues. Position 919 is a phosphothreonine (Thr-919). A phosphoserine mark is found at Ser-921, Ser-927, Ser-928, and Ser-931. Ser-935 is modified (phosphoserine; by CDK1).

As to quaternary structure, found in a complex composed at least of ARHGEF2, NOD2 and RIPK2. Interacts with RIPK2; the interaction mediates tyrosine phosphorylation of RIPK2 by Src kinase CSK. Interacts with RIPK1 and RIPK3. Interacts with YWHAZ/14-3-3 zeta; when phosphorylated at Ser-860. Interacts with the kinases PAK4, AURKA and MAPK1. Interacts with RHOA and RAC1. Interacts with NOD1. Interacts (via the N- terminal zinc finger) with CAPN6 (via domain II). Interacts with DYNLT1. Post-translationally, phosphorylation of Ser-860 by PAK1 induces binding to protein YWHAZ, promoting its relocation to microtubules and the inhibition of its activity. Phosphorylated by AURKA and CDK1 during mitosis, which negatively regulates its activity. Phosphorylation by MAPK1 or MAPK3 increases nucleotide exchange activity. Phosphorylation by PAK4 releases GEF-H1 from the microtubules. Phosphorylated on serine, threonine and tyrosine residues in a RIPK2-dependent manner.

Its subcellular location is the cytoplasm. The protein localises to the cytoskeleton. It localises to the cell junction. The protein resides in the tight junction. It is found in the golgi apparatus. Its subcellular location is the spindle. The protein localises to the cytoplasmic vesicle. Activates Rho-GTPases by promoting the exchange of GDP for GTP. May be involved in epithelial barrier permeability, cell motility and polarization, dendritic spine morphology, antigen presentation, leukemic cell differentiation, cell cycle regulation, innate immune response, and cancer. Binds Rac-GTPases, but does not seem to promote nucleotide exchange activity toward Rac-GTPases. May stimulate instead the cortical activity of Rac. Inactive toward CDC42, TC10, or Ras-GTPases. Forms an intracellular sensing system along with NOD1 for the detection of microbial effectors during cell invasion by pathogens. Involved in innate immune signaling transduction pathway promoting cytokine IL6/interleukin-6 and TNF-alpha secretion in macrophage upon stimulation by bacterial peptidoglycans; acts as a signaling intermediate between NOD2 receptor and RIPK2 kinase. Contributes to the tyrosine phosphorylation of RIPK2 through Src tyrosine kinase leading to NF-kappaB activation by NOD2. Overexpression activates Rho-, but not Rac-GTPases, and increases paracellular permeability. Involved in neuronal progenitor cell division and differentiation. Involved in the migration of precerebellar neurons. The sequence is that of Rho guanine nucleotide exchange factor 2 (ARHGEF2) from Sus scrofa (Pig).